A 121-amino-acid chain; its full sequence is Huntingtin-interacting protein K (121 aa).

A compositionally biased stretch (acidic residues) spans 1–13; sequence MATEGDVELELET. The interval 1 to 75 is disordered; that stretch reads MATEGDVELE…EQKAKQEREK (75 aa). Basic and acidic residues-rich tracts occupy residues 20 to 47 and 60 to 75; these read RPPE…EKEI and GDRR…EREK. Ser30 carries the phosphoserine modification. The interval 52-121 is required for association with the NAA10-NAA15 complex; that stretch reads LETAMSVIGD…VVEALIALTN (70 aa). A coiled-coil region spans residues 62 to 107; that stretch reads RRSREQKAKQEREKELAKVTIKKEDLELIMTEMEISRAAAERSLRE.

In terms of assembly, component of the N-terminal acetyltransferase A (NatA)/HYPK complex at least composed of NAA10, NAA15 and HYPK, which has N-terminal acetyltransferase activity. Within the complex interacts with NAA10. Within the complex interacts with NAA15. Predominantly interacts with NAA15 in the NAA10-NAA15 complex (also called the NatA complex); the interaction with the NatA complex reduces the acetylation activity of the NatA complex. Interacts with HTT (via N-terminus). The NatA complex is required for HYPK stability and for reducing polyQ aggregation of HTT. Component of the N-terminal acetyltransferase E (NatE)/HYPK complex at least composed of NAA10, NAA15, NAA50 and HYPK. Within the complex interacts with NAA10 and NAA15. Does not interact with NAA50. Interaction with NAA15 reduces the capacity of NAA15 to interact with NAA50. Its capacity to interact with the NatA complex is reduced by NAA50. Does not interact with the N-terminal acetyltransferase B (NatB) complex component NAA25 or the N-terminal acetyltransferase C (NatC) complex component NAA35.

The protein resides in the nucleus. It is found in the cytoplasm. In terms of biological role, component of several N-terminal acetyltransferase complexes. Inhibits the N-terminal acetylation activity of the N-terminal acetyltransferase NAA10-NAA15 complex (also called the NatA complex). Has chaperone-like activity preventing polyglutamine (polyQ) aggregation of HTT in neuronal cells probably while associated with the NatA complex. May play a role in the NatA complex-mediated N-terminal acetylation of PCNP. This Homo sapiens (Human) protein is Huntingtin-interacting protein K.